The sequence spans 339 residues: Protein H339R (339 aa).

The protein belongs to the asfivirus H339R family. Interacts with host NACA (alpha chain of nascent polypeptide-associated complex).

The protein resides in the host cytoplasm. It is found in the host nucleus. This chain is Protein H339R, found in African swine fever virus (isolate Tick/Malawi/Lil 20-1/1983) (ASFV).